A 552-amino-acid chain; its full sequence is Leiomodin-2 (552 aa).

An interaction with tropomyosin alpha region spans residues 1-47 (MSTFGYRRELSKYEDIDEDELLASLTEEELKELERELEDIEPDRNLP). Interaction with actin stretches follow at residues 1–169 (MSTF…SSHV) and 170–498 (RHKK…KEIK). A coiled-coil region spans residues 13-46 (YEDIDEDELLASLTEEELKELERELEDIEPDRNL). Disordered stretches follow at residues 33–67 (LERE…FSRE), 87–191 (GACE…DGKD), and 364–531 (MDKQ…DNLM). Residues 51–64 (RQKSLTEKTPTGTF) are compositionally biased toward polar residues. The stretch at 86–151 (LGACEKDSEQ…DDEDEEKQNS (66 aa)) forms a coiled coil. Acidic residues-rich tracts occupy residues 93 to 108 (SEQE…EECF) and 115 to 147 (VSEE…EDEE). The span at 364–377 (MDKQRQKRMQEQRQ) shows a compositional bias: basic and acidic residues. Low complexity predominate over residues 398–415 (PRSSPYTSPKSSPWSSPK). The span at 425-450 (SQPPAPAPPPPPPPPPPPPPPPPPVI) shows a compositional bias: pro residues. Basic residues predominate over residues 478–488 (QKKKKGKKGKK). Residues 489 to 513 (HENSILKEIKDSLKSVSDRKSEEGS) show a composition bias toward basic and acidic residues. Residues 514–524 (RPSTRPSTPQR) are compositionally biased toward polar residues. The interval 526–545 (LHDNLMEAIRASSIKQLRRV) is interaction with actin 3. The WH2 domain occupies 526–545 (LHDNLMEAIRASSIKQLRRV).

The protein belongs to the tropomodulin family. In terms of assembly, can bind at least three actin monomers and thereby provides a nucleus for actin filament formation. Interacts (via N-terminus) with tropomyosin alpha (TPM1) (via N-terminus). May also interact with TPM2 (via N-terminus).

The protein localises to the cytoplasm. It localises to the myofibril. It is found in the sarcomere. Its subcellular location is the m line. The protein resides in the cytoskeleton. Its function is as follows. Mediates nucleation of actin filaments and thereby promotes actin polymerization. Plays a role in the regulation of actin filament length. Required for normal sarcomere organization in the heart, and for normal heart function. This is Leiomodin-2 (LMOD2) from Gallus gallus (Chicken).